We begin with the raw amino-acid sequence, 952 residues long: Protocadherin-20 (952 aa).

Positions 1-60 (MRGRGNARSLLVQAVSLRPATWHPCLDMGHLHRPSSRTSHRNLPHVFLLFLFVGPFNCLA) are cleaved as a signal peptide. Over 61 to 891 (SYSRATELLY…VESMSCMPTL (831 aa)) the chain is Extracellular. Cadherin domains are found at residues 64–210 (RATE…APQF), 211–321 (PISE…CPLF), 322–536 (IDSQ…APVF), 537–640 (LQPL…SPRF), 641–743 (INKD…PPLV), and 747–864 (QSNM…EPEI). Asparagine 135 carries N-linked (GlcNAc...) asparagine glycosylation. N-linked (GlcNAc...) asparagine glycans are attached at residues asparagine 327 and asparagine 333. 5 N-linked (GlcNAc...) asparagine glycosylation sites follow: asparagine 681, asparagine 749, asparagine 804, asparagine 845, and asparagine 850. Residues 892–912 (VALSVISLGSITLVTGMGIYI) traverse the membrane as a helical segment. Topologically, residues 913–952 (CLRKGKKHHREDDNLEVQIPLKGKIDLCMRERKPVDISNI) are cytoplasmic.

It is found in the cell membrane. In terms of biological role, potential calcium-dependent cell-adhesion protein. In Mus musculus (Mouse), this protein is Protocadherin-20 (Pcdh20).